The following is a 95-amino-acid chain: Large ribosomal subunit protein bL31 (95 aa).

The segment at 68 to 95 (AGLNNINKKPEKKKIQGKSEPRKSLNEL) is disordered. Over residues 80–95 (KKIQGKSEPRKSLNEL) the composition is skewed to basic and acidic residues.

This sequence belongs to the bacterial ribosomal protein bL31 family. Type A subfamily. Part of the 50S ribosomal subunit.

Functionally, binds the 23S rRNA. This chain is Large ribosomal subunit protein bL31, found in Ureaplasma parvum serovar 3 (strain ATCC 700970).